Consider the following 156-residue polypeptide: Endoribonuclease YbeY (156 aa).

Residues His-122, His-126, and His-132 each contribute to the Zn(2+) site.

The protein belongs to the endoribonuclease YbeY family. Requires Zn(2+) as cofactor.

The protein localises to the cytoplasm. Functionally, single strand-specific metallo-endoribonuclease involved in late-stage 70S ribosome quality control and in maturation of the 3' terminus of the 16S rRNA. The chain is Endoribonuclease YbeY from Symbiobacterium thermophilum (strain DSM 24528 / JCM 14929 / IAM 14863 / T).